A 528-amino-acid chain; its full sequence is Linear element-associated protein hop1 (528 aa).

The HORMA domain maps to 11-212 (TKSDFTLKNL…RGEFKDIVSF (202 aa)). A PHD-type zinc finger spans residues 334–385 (LLNCECGDSTEDSEMFQCERCDGWVHCACYGFESDSDPRQPNQLLCYTCLLV). Residues Cys-337, Cys-339, Cys-351, Cys-354, His-359, Cys-362, Cys-379, and Cys-382 each coordinate Zn(2+). The segment at 507–528 (RPKKVSKTSNTKETDTMKPLRI) is disordered. Positions 516 to 528 (NTKETDTMKPLRI) are enriched in basic and acidic residues.

Interacts (via N-terminus) with rec10; the interaction is direct. Interacts (via C-terminus) with rec15 (via C-terminus); the interaction is direct.

Its subcellular location is the nucleus. It is found in the chromosome. Functionally, facilitates initiation of meiotic recombination and DNA double-strand break (DSB) formation at DSB hotspot sites by enhancing the interaction between rec10 and rec15. This chain is Linear element-associated protein hop1, found in Schizosaccharomyces pombe (strain 972 / ATCC 24843) (Fission yeast).